Consider the following 152-residue polypeptide: Ribosome maturation factor RimP (152 aa).

This sequence belongs to the RimP family.

It localises to the cytoplasm. In terms of biological role, required for maturation of 30S ribosomal subunits. In Aeromonas salmonicida (strain A449), this protein is Ribosome maturation factor RimP.